The sequence spans 83 residues: Gas vesicle protein G2 (83 aa).

The protein belongs to the gas vesicle GvpG family. As to quaternary structure, gvpF to GvpM interact with each other in vitro, and may form multi-subunit complex(es).

The protein resides in the gas vesicle. Proteins GvpF to GvpM might be involved in nucleating gas vesicle formation. A minor component of the gas vesicle. Gas vesicles are hollow, gas filled proteinaceous nanostructures found in several microbial planktonic microorganisms. They allow positioning of halobacteria at the optimal depth for growth in the poorly aerated, shallow brine pools of their habitat. Its function is as follows. Expression of 2 c-vac DNA fragments containing 2 divergently transcribed regions (gvpE-gvpF-gvpG-gvpH-gvpI-gvpJ-gvpK-gvpL-gvpM and gvpA-gvpC-gvpN-gvpO) allows H.volcanii to produce gas vesicles. This is Gas vesicle protein G2 from Halobacterium salinarum (strain ATCC 700922 / JCM 11081 / NRC-1) (Halobacterium halobium).